Reading from the N-terminus, the 338-residue chain is P2Y purinoceptor 14 (338 aa).

Residues 1–29 (MINSTSTQPPDESCSQNLLITQQIIPVLY) lie on the Extracellular side of the membrane. N-linked (GlcNAc...) asparagine glycosylation occurs at Asn3. Residues 30 to 50 (CMVFIAGILLNGVSGWIFFYV) form a helical membrane-spanning segment. Residues 51 to 55 (PSSKS) are Cytoplasmic-facing. The chain crosses the membrane as a helical span at residues 56–76 (FIIYLKNIVIADFVMSLTFPF). The Extracellular segment spans residues 77–96 (KILGDSGLGPWQLNVFVCRV). Cys94 and Cys172 are oxidised to a cystine. The helical transmembrane segment at 97–117 (SAVLFYVNMYVSIVFFGLISF) threads the bilayer. Over 118-139 (DRYYKIVKPLWTSFIQSVSYSK) the chain is Cytoplasmic. Residues 140 to 160 (LLSVIVWMLMLLLAVPNIILT) form a helical membrane-spanning segment. Asn161 is a glycosylation site (N-linked (GlcNAc...) asparagine). Residues 161 to 188 (NQSVREVTQIKCIELKSELGRKWHKASN) are Extracellular-facing. The helical transmembrane segment at 189–209 (YIFVAIFWIVFLLLIVFYTAI) threads the bilayer. Topologically, residues 210–234 (TKKIFKSHLKSSRNSTSVKKKSSRN) are cytoplasmic. A helical membrane pass occupies residues 235-255 (IFSIVFVFFVCFVPYHIARIP). Residues 256-278 (YTKSQTEAHYSCQSKEILRYMKE) are Extracellular-facing. The chain crosses the membrane as a helical span at residues 279–299 (FTLLLSAANVCLDPIIYFFLC). At 300 to 338 (QPFREILCKKLHIPLKAQNDLDISRIKRGNTTLESTDTL) the chain is on the cytoplasmic side.

It belongs to the G-protein coupled receptor 1 family. Highest expression in the placenta, adipose tissue, stomach and intestine, intermediate levels in the brain, spleen, lung and heart, lowest levels in the kidney.

Its subcellular location is the cell membrane. Receptor for UDP-glucose and other UDP-sugar coupled to G-proteins. Not activated by ATP, ADP, UTP or ATP. The protein is P2Y purinoceptor 14 (P2RY14) of Homo sapiens (Human).